Here is a 463-residue protein sequence, read N- to C-terminus: Type II NADH:quinone oxidoreductase Ndh (463 aa).

Residues 21–25 (GSGFG) and Val-89 each bind FAD. The active site involves Glu-184. FAD-binding positions include Asp-322 and 333–334 (AQ). The chain crosses the membrane as a helical span at residues 387-407 (FSGFIAWLIWLVLHLAYLIGF).

The protein belongs to the NADH dehydrogenase family. Requires FAD as cofactor.

Its subcellular location is the cell inner membrane. The enzyme catalyses a quinone + NADH + H(+) = a quinol + NAD(+). It carries out the reaction a menaquinone + NADH + H(+) = a menaquinol + NAD(+). The catalysed reaction is a ubiquinone + NADH + H(+) = a ubiquinol + NAD(+). Its activity is regulated as follows. Inhibited by phenothiazine analogs. Inhibited by 2-mercapto-quinazolinones. Not inhibited by classic inhibitors of type I NADH dehydrogenase, such as rotenone, piericidin A and pyridaben. Its function is as follows. Alternative, nonproton pumping NADH:quinone oxidoreductase that delivers electrons to the respiratory chain by oxidation of NADH and reduction of quinones. Ndh is probably the main NADH dehydrogenase of M.tuberculosis. This Mycobacterium tuberculosis (strain ATCC 25618 / H37Rv) protein is Type II NADH:quinone oxidoreductase Ndh.